Consider the following 990-residue polypeptide: Transposase for transposon Tn3926 (990 aa).

Positions G673 to N698 are disordered. Residues D674–H696 show a composition bias toward polar residues.

It belongs to the transposase 7 family.

Required for transposition of transposon Tn3926. The chain is Transposase for transposon Tn3926 (tnpA) from Escherichia coli.